The following is a 279-amino-acid chain: Odontogenic ameloblast-associated protein (279 aa).

The signal sequence occupies residues 1–15 (MKIIILLGFLGATLS). O-linked (GalNAc...) threonine glycosylation is found at threonine 115 and threonine 119. Positions 127–129 (MPY) are interaction with ARHGEF5. Residues 243-263 (STSPKPSTTNVFTSAVDQTIT) are compositionally biased toward polar residues. The interval 243-279 (STSPKPSTTNVFTSAVDQTITPELPEEKDKTDSLREP) is disordered. O-linked (GalNAc...) threonine glycosylation is present at threonine 244. Residue serine 249 is glycosylated (O-linked (GalNAc...) serine). O-linked (GalNAc...) threonine glycans are attached at residues threonine 250, threonine 251, and threonine 255. Serine 256 is a glycosylation site (O-linked (GalNAc...) serine). Threonine 261, threonine 263, and threonine 273 each carry an O-linked (GalNAc...) threonine glycan. Basic and acidic residues predominate over residues 267–279 (PEEKDKTDSLREP). A glycan (O-linked (GalNAc...) serine) is linked at serine 275.

This sequence belongs to the ODAM family. Interacts (via C-terminus) with ARHGEF5. O-glycosylated. In terms of tissue distribution, expressed in the junctional epithelium of healthy teeth. In periodontitis, absent in the pocket epithelium of the diseased periodontium but is detected in the gingival crevicular fluid.

The protein localises to the secreted. It is found in the cytoplasm. Its subcellular location is the nucleus. In terms of biological role, tooth-associated epithelia protein that probably plays a role in odontogenesis, the complex process that results in the initiation and generation of the tooth. May be incorporated in the enamel matrix at the end of mineralization process. Involved in the induction of RHOA activity via interaction with ARHGEF and expression of downstream factors such as ROCK. Plays a role in attachment of the junctional epithelium to the tooth surface. In Homo sapiens (Human), this protein is Odontogenic ameloblast-associated protein (ODAM).